The following is a 195-amino-acid chain: Pyridoxal 5'-phosphate synthase subunit PdxT (195 aa).

An L-glutamine-binding site is contributed by 46-48 (GES). C78 functions as the Nucleophile in the catalytic mechanism. L-glutamine-binding positions include R105 and 133-134 (IR). Residues H169 and E171 each act as charge relay system in the active site.

This sequence belongs to the glutaminase PdxT/SNO family. In terms of assembly, in the presence of PdxS, forms a dodecamer of heterodimers. Only shows activity in the heterodimer.

It catalyses the reaction aldehydo-D-ribose 5-phosphate + D-glyceraldehyde 3-phosphate + L-glutamine = pyridoxal 5'-phosphate + L-glutamate + phosphate + 3 H2O + H(+). The catalysed reaction is L-glutamine + H2O = L-glutamate + NH4(+). It participates in cofactor biosynthesis; pyridoxal 5'-phosphate biosynthesis. Catalyzes the hydrolysis of glutamine to glutamate and ammonia as part of the biosynthesis of pyridoxal 5'-phosphate. The resulting ammonia molecule is channeled to the active site of PdxS. In Shouchella clausii (strain KSM-K16) (Alkalihalobacillus clausii), this protein is Pyridoxal 5'-phosphate synthase subunit PdxT.